The sequence spans 828 residues: Periplasmic nitrate reductase (828 aa).

Residues 1–31 constitute a signal peptide (tat-type signal); sequence MKLSRRSFMKANAVAAAAAAAGLSVPGVARA. The 4Fe-4S Mo/W bis-MGD-type domain occupies 39–95; the sequence is IKWDKAPCRFCGTGCGVLVGTQQGRVVACQGDPDAPVNRGLNCIKGYFLPKIMYGKD. Positions 46, 49, 53, and 81 each coordinate [4Fe-4S] cluster. Residues Lys-83, Gln-150, Asn-175, Cys-179, 212–219, 243–247, 262–264, Met-372, Gln-376, Asn-482, 508–509, Lys-531, Asp-558, and 718–727 each bind Mo-bis(molybdopterin guanine dinucleotide); these read WGANMAEM, STYQH, QSD, SD, and TGRVLEHWHT. Position 794 (Phe-794) interacts with substrate. Mo-bis(molybdopterin guanine dinucleotide)-binding residues include Asn-802 and Lys-819.

It belongs to the prokaryotic molybdopterin-containing oxidoreductase family. NasA/NapA/NarB subfamily. In terms of assembly, component of the periplasmic nitrate reductase NapAB complex composed of NapA and NapB. [4Fe-4S] cluster is required as a cofactor. Requires Mo-bis(molybdopterin guanine dinucleotide) as cofactor. Post-translationally, predicted to be exported by the Tat system. The position of the signal peptide cleavage has not been experimentally proven.

It localises to the periplasm. It carries out the reaction 2 Fe(II)-[cytochrome] + nitrate + 2 H(+) = 2 Fe(III)-[cytochrome] + nitrite + H2O. Its function is as follows. Catalytic subunit of the periplasmic nitrate reductase complex NapAB. Receives electrons from NapB and catalyzes the reduction of nitrate to nitrite. The polypeptide is Periplasmic nitrate reductase (Escherichia coli (strain K12 / MC4100 / BW2952)).